Consider the following 593-residue polypeptide: Probable translation initiation factor IF-2 (593 aa).

Positions 7 to 221 (IRTPIVCVMG…VLIGLAQRYM (215 aa)) constitute a tr-type G domain. The tract at residues 16 to 23 (GHVDHGKT) is G1. 16 to 23 (GHVDHGKT) is a GTP binding site. The tract at residues 41 to 45 (EITQH) is G2. The tract at residues 77–80 (DTPG) is G3. GTP-binding positions include 77–81 (DTPGH) and 131–134 (NKVD). Residues 131–134 (NKVD) are G4. The segment at 199-201 (SAL) is G5.

It belongs to the TRAFAC class translation factor GTPase superfamily. Classic translation factor GTPase family. IF-2 subfamily.

Functionally, function in general translation initiation by promoting the binding of the formylmethionine-tRNA to ribosomes. Seems to function along with eIF-2. This chain is Probable translation initiation factor IF-2, found in Methanoculleus marisnigri (strain ATCC 35101 / DSM 1498 / JR1).